We begin with the raw amino-acid sequence, 209 residues long: dITP/XTP pyrophosphatase (209 aa).

7 to 12 provides a ligand contact to substrate; the sequence is SSHGYK. The Proton acceptor role is filled by D70. Residue D70 participates in Mg(2+) binding. Substrate contacts are provided by residues S71, 154–157, K177, and 182–183; these read FGYD and HR.

It belongs to the HAM1 NTPase family. In terms of assembly, homodimer. Mg(2+) serves as cofactor.

The catalysed reaction is XTP + H2O = XMP + diphosphate + H(+). The enzyme catalyses dITP + H2O = dIMP + diphosphate + H(+). It catalyses the reaction ITP + H2O = IMP + diphosphate + H(+). Its function is as follows. Pyrophosphatase that catalyzes the hydrolysis of nucleoside triphosphates to their monophosphate derivatives, with a high preference for the non-canonical purine nucleotides XTP (xanthosine triphosphate), dITP (deoxyinosine triphosphate) and ITP. Seems to function as a house-cleaning enzyme that removes non-canonical purine nucleotides from the nucleotide pool, thus preventing their incorporation into DNA/RNA and avoiding chromosomal lesions. This Chlamydia muridarum (strain MoPn / Nigg) protein is dITP/XTP pyrophosphatase.